The sequence spans 132 residues: uncharacterized protein (132 aa).

The tract at residues 68-91 (WSRTSPNSSRSSPRSPASMASTSS) is disordered.

This is an uncharacterized protein from Streptomyces cacaoi.